A 135-amino-acid polypeptide reads, in one-letter code: Large-conductance mechanosensitive channel (135 aa).

A run of 2 helical transmembrane segments spans residues 10 to 30 (FAMK…AAFG) and 76 to 96 (GAFI…FCAI).

It belongs to the MscL family. As to quaternary structure, homopentamer.

The protein localises to the cell inner membrane. Functionally, channel that opens in response to stretch forces in the membrane lipid bilayer. May participate in the regulation of osmotic pressure changes within the cell. The protein is Large-conductance mechanosensitive channel of Proteus mirabilis (strain HI4320).